Consider the following 225-residue polypeptide: Probable iron export ATP-binding protein FetA (225 aa).

Residues 8-225 (LQLQNVGYLA…EMQEARYELA (218 aa)) form the ABC transporter domain. 40–47 (GPSGCGKS) serves as a coordination point for ATP.

The protein belongs to the ABC transporter superfamily. In terms of assembly, the complex is composed of two ATP-binding proteins (FetA) and two transmembrane proteins (FetB).

It localises to the cell inner membrane. Its function is as follows. Part of the ABC transporter complex FetAB, which is probably involved in iron export and enhances resistance to H(2)O(2)-mediated oxidative stress. Probably responsible for energy coupling to the transport system. This Escherichia coli (strain K12) protein is Probable iron export ATP-binding protein FetA (fetA).